A 361-amino-acid polypeptide reads, in one-letter code: S-adenosylmethionine:tRNA ribosyltransferase-isomerase (361 aa).

Belongs to the QueA family. As to quaternary structure, monomer.

The protein resides in the cytoplasm. It carries out the reaction 7-aminomethyl-7-carbaguanosine(34) in tRNA + S-adenosyl-L-methionine = epoxyqueuosine(34) in tRNA + adenine + L-methionine + 2 H(+). Its pathway is tRNA modification; tRNA-queuosine biosynthesis. Its function is as follows. Transfers and isomerizes the ribose moiety from AdoMet to the 7-aminomethyl group of 7-deazaguanine (preQ1-tRNA) to give epoxyqueuosine (oQ-tRNA). This is S-adenosylmethionine:tRNA ribosyltransferase-isomerase from Glaesserella parasuis serovar 5 (strain SH0165) (Haemophilus parasuis).